The chain runs to 516 residues: Radial spoke head protein 3 homolog A (516 aa).

3 disordered regions span residues 1–45 (MAAT…GNPA), 120–139 (STLNQASAMTDPNPRTAEAS), and 190–233 (PTGQ…PVEG). The segment covering 12-25 (AKKRPLHQRARRPA) has biased composition (basic residues). Polar residues predominate over residues 120–129 (STLNQASAMT). Over residues 208-217 (QARRRALARK) the composition is skewed to basic residues. The span at 218–233 (RAQEQLKPRTPEPVEG) shows a compositional bias: basic and acidic residues. A Phosphothreonine; by MAPK1 modification is found at Thr-270. Positions 333 to 369 (YEEIRNVELAEVQRLEEQERRHREEKERRKKQQWEIV) form a coiled coil. The segment at 459 to 516 (EAMPPGQKTNVINGPNTVTDPSVTTLHTQKPVLDRVSSQPAPSQERKPVEEGGHLMAE) is disordered. Over residues 465-486 (QKTNVINGPNTVTDPSVTTLHT) the composition is skewed to polar residues. Basic and acidic residues predominate over residues 502 to 516 (QERKPVEEGGHLMAE).

The protein belongs to the flagellar radial spoke RSP3 family. As to quaternary structure, may be a component of axonemal radial spokes. Interacts with IQUB. Interacts with phosphorylated MAPK1. Interacts with MEK1. Interacts with PKA regulatory subunits PRKAR1A and PRKAR1B. Interacts with RSPH1. Interacts with RSPH4A. Interacts with RSPH6A. Interacts with RSPH9. Interacts with CFAP61. Interacts with LRRC23.

The protein localises to the cytoplasm. It localises to the cytoskeleton. Its subcellular location is the cilium axoneme. It is found in the flagellum axoneme. May function as part of axonemal radial spoke complexes that play an important part in the motility of sperm and cilia. Functions as a protein kinase A-anchoring protein that scaffolds the cAMP-dependent protein kinase holoenzyme. May serve as a point of convergence for MAPK and PKA signaling in cilia. The chain is Radial spoke head protein 3 homolog A (Rsph3a) from Mus musculus (Mouse).